The primary structure comprises 106 residues: Urease subunit beta (106 aa).

It belongs to the urease beta subunit family. In terms of assembly, heterotrimer of UreA (gamma), UreB (beta) and UreC (alpha) subunits. Three heterotrimers associate to form the active enzyme.

The protein localises to the cytoplasm. The catalysed reaction is urea + 2 H2O + H(+) = hydrogencarbonate + 2 NH4(+). It functions in the pathway nitrogen metabolism; urea degradation; CO(2) and NH(3) from urea (urease route): step 1/1. The protein is Urease subunit beta of Klebsiella pneumoniae (strain 342).